Consider the following 228-residue polypeptide: Leucyl/phenylalanyl-tRNA--protein transferase (228 aa).

Belongs to the L/F-transferase family.

The protein localises to the cytoplasm. The enzyme catalyses N-terminal L-lysyl-[protein] + L-leucyl-tRNA(Leu) = N-terminal L-leucyl-L-lysyl-[protein] + tRNA(Leu) + H(+). It catalyses the reaction N-terminal L-arginyl-[protein] + L-leucyl-tRNA(Leu) = N-terminal L-leucyl-L-arginyl-[protein] + tRNA(Leu) + H(+). It carries out the reaction L-phenylalanyl-tRNA(Phe) + an N-terminal L-alpha-aminoacyl-[protein] = an N-terminal L-phenylalanyl-L-alpha-aminoacyl-[protein] + tRNA(Phe). Its function is as follows. Functions in the N-end rule pathway of protein degradation where it conjugates Leu, Phe and, less efficiently, Met from aminoacyl-tRNAs to the N-termini of proteins containing an N-terminal arginine or lysine. The chain is Leucyl/phenylalanyl-tRNA--protein transferase from Thiobacillus denitrificans (strain ATCC 25259 / T1).